Consider the following 163-residue polypeptide: Meiotically up-regulated gene 109 protein (163 aa).

Transmembrane regions (helical) follow at residues 61 to 78, 82 to 104, 114 to 134, and 136 to 156; these read YRFYGTLLCICWLYFFIW, ALLALMVGVFLSFVMHGLGSLTI, YSIPGVCAVTLIVIMFLAPVG, and LFWSFCIVSSFAGLHCLLTTY.

The protein localises to the membrane. Functionally, has a role in meiosis. In Schizosaccharomyces pombe (strain 972 / ATCC 24843) (Fission yeast), this protein is Meiotically up-regulated gene 109 protein (mug109).